A 215-amino-acid chain; its full sequence is Uridine kinase (215 aa).

16-23 (GASASGKS) contacts ATP.

It belongs to the uridine kinase family.

The protein localises to the cytoplasm. The catalysed reaction is uridine + ATP = UMP + ADP + H(+). The enzyme catalyses cytidine + ATP = CMP + ADP + H(+). The protein operates within pyrimidine metabolism; CTP biosynthesis via salvage pathway; CTP from cytidine: step 1/3. It participates in pyrimidine metabolism; UMP biosynthesis via salvage pathway; UMP from uridine: step 1/1. The protein is Uridine kinase of Aliivibrio fischeri (strain ATCC 700601 / ES114) (Vibrio fischeri).